The sequence spans 593 residues: Glutamate decarboxylase 1 (593 aa).

Positions Met-1 to Ser-12 are enriched in low complexity. The tract at residues Met-1–Asn-22 is disordered. Ser-77 carries the post-translational modification Phosphoserine. Residue Gln-189–Ser-191 participates in 4-aminobutanoate binding. Residue Lys-404 is modified to N6-(pyridoxal phosphate)lysine. Residue Arg-566 participates in 4-aminobutanoate binding.

The protein belongs to the group II decarboxylase family. Homodimer. Pyridoxal 5'-phosphate is required as a cofactor.

It catalyses the reaction L-glutamate + H(+) = 4-aminobutanoate + CO2. In terms of biological role, catalyzes the synthesis of the inhibitory neurotransmitter gamma-aminobutyric acid (GABA) with pyridoxal 5'-phosphate as cofactor. The protein is Glutamate decarboxylase 1 (Gad1) of Mus musculus (Mouse).